The chain runs to 166 residues: Endoribonuclease YbeY (166 aa).

Residues His-132, His-136, and His-142 each coordinate Zn(2+).

It belongs to the endoribonuclease YbeY family. The cofactor is Zn(2+).

Its subcellular location is the cytoplasm. In terms of biological role, single strand-specific metallo-endoribonuclease involved in late-stage 70S ribosome quality control and in maturation of the 3' terminus of the 16S rRNA. This chain is Endoribonuclease YbeY, found in Clostridium botulinum (strain ATCC 19397 / Type A).